The chain runs to 102 residues: Small ribosomal subunit protein uS10 (102 aa).

This sequence belongs to the universal ribosomal protein uS10 family. As to quaternary structure, part of the 30S ribosomal subunit.

Involved in the binding of tRNA to the ribosomes. The protein is Small ribosomal subunit protein uS10 of Symbiobacterium thermophilum (strain DSM 24528 / JCM 14929 / IAM 14863 / T).